The sequence spans 168 residues: Desumoylating isopeptidase 1 (168 aa).

In terms of domain architecture, PPPDE spans 7 to 149 (YPVKLYVYDL…FGQALRPLLD (143 aa)). The active site involves His-38. The Nuclear export signal 1 motif lies at 83 to 91 (IFLEYLSSL). Cys-108 is a catalytic residue. Positions 139–153 (PFGQALRPLLDSIQI) match the Nuclear export signal 2 motif.

Belongs to the DeSI family. Homodimer. Interacts with UBQLN4; leading to the export of UBQLN4 from the nucleus.

It is found in the cytoplasm. It localises to the nucleus. It catalyses the reaction S-hexadecanoyl-L-cysteinyl-[protein] + H2O = L-cysteinyl-[protein] + hexadecanoate + H(+). Palmostatin B inhibits its palmitoyl protein thioesterase activity. In terms of biological role, protease which deconjugates SUMO1, SUMO2 and SUMO3 from some substrate proteins. Has isopeptidase but not SUMO-processing activity. Desumoylates ZBTB46. Collaborates with UBQLN4 in the export of ubiquitinated proteins from the nucleus to the cytoplasm. Exhibits palmitoyl protein thioesterase (S-depalmitoylation) activity towards synthetic substrates 4-methylumbelliferyl-6-S-palmitoyl-beta-D-glucopyranoside and S-depalmitoylation probe 5 (DPP-5). This chain is Desumoylating isopeptidase 1, found in Homo sapiens (Human).